The sequence spans 374 residues: Protein dip1 (374 aa).

Belongs to the LDB17 family.

The protein resides in the cytoplasm. It localises to the nucleus. The protein localises to the cell tip. Its function is as follows. May be involved in protein-linked oligosaccharide phosphorylation. In Schizosaccharomyces pombe (strain 972 / ATCC 24843) (Fission yeast), this protein is Protein dip1 (dip1).